A 497-amino-acid polypeptide reads, in one-letter code: Cysteine desulfurase, mitochondrial (497 aa).

The N-terminal 33 residues, 1–33 (MLKSTATRSITRLSQVYNVPAATYRACLVSRRF), are a transit peptide targeting the mitochondrion. Pyridoxal 5'-phosphate contacts are provided by residues 168 to 169 (AT), asparagine 248, glutamine 276, and 296 to 298 (SSH). Lysine 299 is subject to N6-(pyridoxal phosphate)lysine. Threonine 336 is a binding site for pyridoxal 5'-phosphate. Catalysis depends on cysteine 421, which acts as the Cysteine persulfide intermediate. Residue cysteine 421 participates in [2Fe-2S] cluster binding.

This sequence belongs to the class-V pyridoxal-phosphate-dependent aminotransferase family. NifS/IscS subfamily. Pyridoxal 5'-phosphate is required as a cofactor.

The protein localises to the mitochondrion. The enzyme catalyses (sulfur carrier)-H + L-cysteine = (sulfur carrier)-SH + L-alanine. In terms of biological role, catalyzes the removal of elemental sulfur from cysteine to produce alanine. It supplies the inorganic sulfur for iron-sulfur (Fe-S) clusters. Plays a role in both tRNA-processing and mitochondrial metabolism. Involved in the 2-thio-modification of both 5-carboxymethylaminomethyl-2-thiouridine in mitochondrial tRNAs and 5-methoxycarbonylmethyl-2-thiouridine (mcm5s2U) in cytoplasmic tRNAs. The sequence is that of Cysteine desulfurase, mitochondrial from Saccharomyces cerevisiae (strain ATCC 204508 / S288c) (Baker's yeast).